A 562-amino-acid chain; its full sequence is Phosphoenolpyruvate carboxykinase (ATP) (562 aa).

265–272 (GLSGTGKT) serves as a coordination point for ATP.

The protein belongs to the phosphoenolpyruvate carboxykinase (ATP) family.

It catalyses the reaction oxaloacetate + ATP = phosphoenolpyruvate + ADP + CO2. Its pathway is carbohydrate biosynthesis; gluconeogenesis. The polypeptide is Phosphoenolpyruvate carboxykinase (ATP) (pckA) (Dictyostelium discoideum (Social amoeba)).